The primary structure comprises 354 residues: Trans-L-3-hydroxyproline dehydratase (354 aa).

The active-site Proton acceptor is C104. Residues G105–H106, D269, and G274–S275 each bind substrate.

Belongs to the proline racemase family. As to quaternary structure, homodimer.

It carries out the reaction trans-3-hydroxy-L-proline = 1-pyrroline-2-carboxylate + H2O. In terms of biological role, catalyzes the dehydration of trans-3-hydroxy-L-proline to delta-1-pyrroline-2-carboxylate (Pyr2C). The sequence is that of Trans-L-3-hydroxyproline dehydratase (L3HYPDH) from Pongo abelii (Sumatran orangutan).